The chain runs to 517 residues: Cytochrome P450 52A8 (517 aa).

C464 serves as a coordination point for heme.

Belongs to the cytochrome P450 family. Requires heme as cofactor.

In terms of biological role, together with an NADPH cytochrome P450 the enzyme system catalyzes the terminal hydroxylation as the first step in the assimilation of alkanes and fatty acids. Preferentially hydroxylates lauric acid. The protein is Cytochrome P450 52A8 (CYP52A8) of Candida tropicalis (Yeast).